The chain runs to 570 residues: GDP-Man:Man(3)GlcNAc(2)-PP-Dol alpha-1,2-mannosyltransferase (570 aa).

Residues 1–7 lie on the Lumenal side of the membrane; sequence MKLADFV. Residues 8–70 traverse the membrane as a helical segment; sequence TYVFGSLLAG…DFGWKNSSVR (63 aa). The Cytoplasmic segment spans residues 71–200; the sequence is RAFILASERP…RLVESKSWPK (130 aa). Residues 201–221 constitute an intramembrane region (helical); that stretch reads FTLLGQAYGSIILSIEALTTL. Residues 222–446 lie on the Cytoplasmic side of the membrane; that stretch reads APDYWIDTMG…FGINAMWNEH (225 aa). The helical intramembrane region spans 447–467; sequence FGIAVVEYMASGLIPLCHASA. Residues 468 to 570 lie on the Cytoplasmic side of the membrane; that stretch reads GPLYDIVVPW…LNLTHNRMFS (103 aa).

It belongs to the glycosyltransferase group 1 family.

Its subcellular location is the endoplasmic reticulum membrane. It carries out the reaction an alpha-D-Man-(1-&gt;3)-[alpha-D-Man-(1-&gt;6)]-beta-D-Man-(1-&gt;4)-beta-D-GlcNAc-(1-&gt;4)-alpha-D-GlcNAc-diphospho-di-trans,poly-cis-dolichol + 2 GDP-alpha-D-mannose = an alpha-D-Man-(1-&gt;2)-alpha-D-Man-(1-&gt;2)-alpha-D-Man-(1-&gt;3)-[alpha-D-Man-(1-&gt;6)]-beta-D-Man-(1-&gt;4)-beta-D-GlcNAc-(1-&gt;4)-alpha-D-GlcNAc-diphospho-di-trans,poly-cis-dolichol + 2 GDP + 2 H(+). It participates in protein modification; protein glycosylation. Functionally, GDP-Man:Man(3)GlcNAc(2)-PP-Dol alpha-1,2-mannosyltransferase that operates in the biosynthetic pathway of dolichol-linked oligosaccharides, the glycan precursors employed in protein asparagine (N)-glycosylation. The assembly of dolichol-linked oligosaccharides begins on the cytosolic side of the endoplasmic reticulum membrane and finishes in its lumen. The sequential addition of sugars to dolichol pyrophosphate produces dolichol-linked oligosaccharides containing fourteen sugars, including two GlcNAcs, nine mannoses and three glucoses. Once assembled, the oligosaccharide is transferred from the lipid to nascent proteins by oligosaccharyltransferases. Catalyzes, on the cytoplasmic face of the endoplasmic reticulum, the addition of the fourth and fifth mannose residues to the dolichol-linked oligosaccharide chain, to produce Man(5)GlcNAc(2)-PP-dolichol core oligosaccharide. The chain is GDP-Man:Man(3)GlcNAc(2)-PP-Dol alpha-1,2-mannosyltransferase (ALG11) from Kluyveromyces lactis (strain ATCC 8585 / CBS 2359 / DSM 70799 / NBRC 1267 / NRRL Y-1140 / WM37) (Yeast).